The sequence spans 260 residues: MTDILNKILTAKAQEVAAQKAAVNAEHIRALAAEAAPVRSFIGSIRGKHRLNLPAVIAEIKKASPSKGLIRPDFRPAEIARAYENAGAACLSVLTDEPYFQGSPEYLKQAREAVSLPVLRKDFIIDEYQVYQARAWGADAVLLIAAALEQEQLERFEAVAHELGMTVLLELHDESELEKCRNLTTPLWGVNNRNLRTFEVSLDQTLSLLPALEGKTVVTESGITGKADVEFMQSRGVHTFLIGETFMRADNIEAEVGKLF.

The protein belongs to the TrpC family.

It catalyses the reaction 1-(2-carboxyphenylamino)-1-deoxy-D-ribulose 5-phosphate + H(+) = (1S,2R)-1-C-(indol-3-yl)glycerol 3-phosphate + CO2 + H2O. It participates in amino-acid biosynthesis; L-tryptophan biosynthesis; L-tryptophan from chorismate: step 4/5. The protein is Indole-3-glycerol phosphate synthase of Neisseria meningitidis serogroup C / serotype 2a (strain ATCC 700532 / DSM 15464 / FAM18).